The chain runs to 377 residues: Prostaglandin E synthase 2 (377 aa).

The Lumenal segment spans residues 1-65 (MAAACTRTLG…LAAPVRGSGR (65 aa)). Residues 66-83 (VLGCAFLLGGGFGLYQTI) traverse the membrane as a helical segment. The GST N-terminal domain occupies 105-182 (LKLTLYQYKT…ALKTYISSKD (78 aa)). Residues valine 153 and 166–167 (DS) each bind glutathione. The GST C-terminal domain occupies 266 to 377 (YIVREGKFGS…RMQKATQHVS (112 aa)).

This sequence belongs to the GST superfamily. In terms of assembly, homodimer.

It localises to the golgi apparatus membrane. The catalysed reaction is prostaglandin H2 = prostaglandin E2. The enzyme catalyses prostaglandin H2 = (12S)-hydroxy-(5Z,8E,10E)-heptadecatrienoate + malonaldehyde. Its pathway is lipid metabolism; prostaglandin biosynthesis. Its activity is regulated as follows. Isomerase activity is increased by sulfhydril compounds. Dithiothreitol (DTT) is most effective, followed by glutathione (GSH) and 2-mercaptoethanol. Functionally, isomerase that catalyzes the conversion of PGH2 into the more stable prostaglandin E2 (PGE2) (in vitro). The biological function and the GSH-dependent property of PTGES2 is still under debate. In vivo, PTGES2 could form a complex with GSH and heme and would not participate in PGE2 synthesis but would catalyze the degradation of prostaglandin E2 H2 (PGH2) to 12(S)-hydroxy-5(Z),8(E),10(E)-heptadecatrienoic acid (HHT) and malondialdehyde (MDA). This chain is Prostaglandin E synthase 2 (ptges2), found in Danio rerio (Zebrafish).